We begin with the raw amino-acid sequence, 724 residues long: Phosphoribosylformylglycinamidine synthase subunit PurL (724 aa).

Histidine 46 is an active-site residue. ATP contacts are provided by tyrosine 49 and lysine 88. Residue glutamate 90 coordinates Mg(2+). Residues 91–94 and arginine 113 each bind substrate; that span reads SHNH. Histidine 92 acts as the Proton acceptor in catalysis. Aspartate 114 contacts Mg(2+). Glutamine 237 contributes to the substrate binding site. Aspartate 265 is a binding site for Mg(2+). 309-311 contacts substrate; the sequence is ESQ. Residues aspartate 489 and glycine 526 each coordinate ATP. Residue asparagine 527 participates in Mg(2+) binding. Serine 529 contributes to the substrate binding site.

This sequence belongs to the FGAMS family. Monomer. Part of the FGAM synthase complex composed of 1 PurL, 1 PurQ and 2 PurS subunits.

Its subcellular location is the cytoplasm. The catalysed reaction is N(2)-formyl-N(1)-(5-phospho-beta-D-ribosyl)glycinamide + L-glutamine + ATP + H2O = 2-formamido-N(1)-(5-O-phospho-beta-D-ribosyl)acetamidine + L-glutamate + ADP + phosphate + H(+). The protein operates within purine metabolism; IMP biosynthesis via de novo pathway; 5-amino-1-(5-phospho-D-ribosyl)imidazole from N(2)-formyl-N(1)-(5-phospho-D-ribosyl)glycinamide: step 1/2. Part of the phosphoribosylformylglycinamidine synthase complex involved in the purines biosynthetic pathway. Catalyzes the ATP-dependent conversion of formylglycinamide ribonucleotide (FGAR) and glutamine to yield formylglycinamidine ribonucleotide (FGAM) and glutamate. The FGAM synthase complex is composed of three subunits. PurQ produces an ammonia molecule by converting glutamine to glutamate. PurL transfers the ammonia molecule to FGAR to form FGAM in an ATP-dependent manner. PurS interacts with PurQ and PurL and is thought to assist in the transfer of the ammonia molecule from PurQ to PurL. The polypeptide is Phosphoribosylformylglycinamidine synthase subunit PurL (Granulibacter bethesdensis (strain ATCC BAA-1260 / CGDNIH1)).